The following is a 103-amino-acid chain: Viscotoxin-B (103 aa).

The N-terminal stretch at 1 to 6 (FRNVES) is a signal peptide. 3 disulfide bridges follow: Cys9-Cys46, Cys10-Cys38, and Cys22-Cys32. A propeptide spans 53–103 (FYCTLGCQSSKCASITTPPNSEVDAEAVRCKAACSNLCDFGVTTNQEIQDD) (acidic domain).

The protein belongs to the plant thionin (TC 1.C.44) family.

It localises to the secreted. In terms of biological role, thionins are small plant proteins which are toxic to animal cells. They seem to exert their toxic effect at the level of the cell membrane. Their precise function is not known. The polypeptide is Viscotoxin-B (THI2.2) (Viscum album (European mistletoe)).